Reading from the N-terminus, the 312-residue chain is Tetraacyldisaccharide 4'-kinase (312 aa).

Residue 60 to 67 (IAGGSGKT) participates in ATP binding.

It belongs to the LpxK family.

It catalyses the reaction a lipid A disaccharide + ATP = a lipid IVA + ADP + H(+). It participates in glycolipid biosynthesis; lipid IV(A) biosynthesis; lipid IV(A) from (3R)-3-hydroxytetradecanoyl-[acyl-carrier-protein] and UDP-N-acetyl-alpha-D-glucosamine: step 6/6. Its function is as follows. Transfers the gamma-phosphate of ATP to the 4'-position of a tetraacyldisaccharide 1-phosphate intermediate (termed DS-1-P) to form tetraacyldisaccharide 1,4'-bis-phosphate (lipid IVA). The sequence is that of Tetraacyldisaccharide 4'-kinase from Helicobacter pylori (strain J99 / ATCC 700824) (Campylobacter pylori J99).